The following is a 127-amino-acid chain: Protein translocase subunit SecE (127 aa).

3 helical membrane passes run 16–36 (IAKW…NHYY), 42–62 (IFQN…IFLT), and 98–118 (IIVT…LIWF).

The protein belongs to the SecE/SEC61-gamma family. As to quaternary structure, component of the Sec protein translocase complex. Heterotrimer consisting of SecY, SecE and SecG subunits. The heterotrimers can form oligomers, although 1 heterotrimer is thought to be able to translocate proteins. Interacts with the ribosome. Interacts with SecDF, and other proteins may be involved. Interacts with SecA.

The protein resides in the cell membrane. Essential subunit of the Sec protein translocation channel SecYEG. Clamps together the 2 halves of SecY. May contact the channel plug during translocation. This chain is Protein translocase subunit SecE, found in Buchnera aphidicola subsp. Baizongia pistaciae (strain Bp).